The following is a 361-amino-acid chain: UDP-N-acetylglucosamine--N-acetylmuramyl-(pentapeptide) pyrophosphoryl-undecaprenol N-acetylglucosamine transferase (361 aa).

UDP-N-acetyl-alpha-D-glucosamine contacts are provided by residues 12–14, Asn123, Arg166, Ser192, and Gln293; that span reads TGG.

The protein belongs to the glycosyltransferase 28 family. MurG subfamily.

It localises to the cell inner membrane. It carries out the reaction di-trans,octa-cis-undecaprenyl diphospho-N-acetyl-alpha-D-muramoyl-L-alanyl-D-glutamyl-meso-2,6-diaminopimeloyl-D-alanyl-D-alanine + UDP-N-acetyl-alpha-D-glucosamine = di-trans,octa-cis-undecaprenyl diphospho-[N-acetyl-alpha-D-glucosaminyl-(1-&gt;4)]-N-acetyl-alpha-D-muramoyl-L-alanyl-D-glutamyl-meso-2,6-diaminopimeloyl-D-alanyl-D-alanine + UDP + H(+). Its pathway is cell wall biogenesis; peptidoglycan biosynthesis. Its function is as follows. Cell wall formation. Catalyzes the transfer of a GlcNAc subunit on undecaprenyl-pyrophosphoryl-MurNAc-pentapeptide (lipid intermediate I) to form undecaprenyl-pyrophosphoryl-MurNAc-(pentapeptide)GlcNAc (lipid intermediate II). In Caulobacter vibrioides (strain ATCC 19089 / CIP 103742 / CB 15) (Caulobacter crescentus), this protein is UDP-N-acetylglucosamine--N-acetylmuramyl-(pentapeptide) pyrophosphoryl-undecaprenol N-acetylglucosamine transferase.